Consider the following 402-residue polypeptide: QKPGETKEVHPQLTTFRCTKRGGCKPATNFIVLDSLSHPIHRAEGLGPGGCGDWGNPPPKDVCPDVESCAKNCIMEGIPDYSQYGVTTNGTSLRLQHILPDGRVPSPRVYLLDKTKRRYEMLHLTGFEFTFDVDATKLPCGMNSALYLSEMHPTGAKSKYNPGGAYYGTGYCDAQCFVTPFINGLGNIEGKGSCCNEMDIWEANSRASHVAPHTCNKKGLYLCEGEECAFEGVCDKNGCGWNNYRVNVTDYYGRGEEFKVNTLKPFTVVTQFLANRRGKLEKIHRFYVQDGKVIESFYTNKEGVPYTNMIDDEFCEATGSRKYMELGATQGMGEALTRGMVLAMSIWWDQGGNMEWLDHGEAGPCAKGEGAPSNIVQVEPFPEVTYTNLRWGEIGSTYQELQ.

Residue Gln-1 is modified to Pyrrolidone carboxylic acid. Intrachain disulfides connect Cys-18–Cys-24, Cys-51–Cys-73, and Cys-63–Cys-69. An N-linked (GlcNAc...) asparagine glycan is attached at Asn-89. Cystine bridges form between Cys-140-Cys-365, Cys-172-Cys-195, Cys-176-Cys-194, Cys-215-Cys-234, Cys-223-Cys-228, and Cys-239-Cys-315. The Nucleophile role is filled by Glu-197. The active-site Proton donor is the Glu-202. N-linked (GlcNAc...) asparagine glycosylation is present at Asn-247.

Belongs to the glycosyl hydrolase 7 (cellulase C) family. As to quaternary structure, monomer.

The protein resides in the secreted. It catalyses the reaction Endohydrolysis of (1-&gt;4)-beta-D-glucosidic linkages in cellulose, lichenin and cereal beta-D-glucans.. Its function is as follows. The biological conversion of cellulose to glucose generally requires three types of hydrolytic enzymes: (1) Endoglucanases which cut internal beta-1,4-glucosidic bonds; (2) Exocellobiohydrolases that cut the disaccharide cellobiose from the non-reducing end of the cellulose polymer chain; (3) Beta-1,4-glucosidases which hydrolyze the cellobiose and other short cello-oligosaccharides to glucose. This is Endoglucanase 1 (CEL7B) from Humicola insolens (Soft-rot fungus).